A 582-amino-acid polypeptide reads, in one-letter code: Protein LYRIC (582 aa).

Over 1-48 (MAARSWQDELAQQAEEGSARLREMLSVGLGFLRTELGLDLGLEPKRYP) the chain is Lumenal. Residues 1-71 (MAARSWQDEL…LLLFLLGYGW (71 aa)) are activation of NF-kappa-B. The chain crosses the membrane as a helical span at residues 49–69 (GWVILVGTGALGLLLLFLLGY). Residues 70–582 (GWAAACAGAR…KKKKKARRET (513 aa)) lie on the Cytoplasmic side of the membrane. The tract at residues 72 to 169 (AAACAGARKK…EKSKKNKKKS (98 aa)) is interaction with BCCIP. The interval 78–222 (ARKKRRSPPR…DSGSLDSTIP (145 aa)) is disordered. The segment covering 93–106 (AAVPAAAPDDLALL) has biased composition (low complexity). Residues 101–205 (DDLALLKNLR…ISHREKRQQR (105 aa)) are interaction with RELA. Basic and acidic residues predominate over residues 109–127 (LRSEEQKKKNRKKLSEKPK). The residue at position 143 (Thr-143) is a Phosphothreonine. Basic residues predominate over residues 160–169 (EKSKKNKKKS). Phosphoserine is present on Ser-180. Over residues 198–208 (HREKRQQRKRD) the composition is skewed to basic residues. Phosphoserine is present on residues Ser-216 and Ser-251. Lys-264 carries the N6-acetyllysine modification. Residues 280–582 (TVNGGGWNEK…KKKKKARRET (303 aa)) are disordered. A phosphoserine mark is found at Ser-298, Ser-306, Ser-308, Ser-311, Ser-323, Ser-339, Ser-344, and Ser-369. The segment covering 320–333 (SAWSQDTGDANTNG) has biased composition (polar residues). Polar residues-rich tracts occupy residues 354-372 (EPVSQSTTSDYQWDVSRNQ) and 383-394 (NGLSSADPNSDW). Residues 381–443 (GLNGLSSADP…EGALPTGKSK (63 aa)) are lung-homing for mammary tumors. Phosphoserine is present on residues Ser-415 and Ser-426. Residues 421 to 434 (DDQKVSDDDKEKGE) are compositionally biased toward basic and acidic residues. Residues 441–451 (KSKKKKKKKKK) are compositionally biased toward basic residues. The residue at position 457 (Ser-457) is a Phosphoserine. Thr-458 is modified (phosphothreonine). Phosphoserine occurs at positions 478, 494, and 496. Composition is skewed to polar residues over residues 504–520 (KNSQPIKTLPPATSTEP) and 549–568 (NTKQNSVPPSQTKSETSWES). At Ser-568 the chain carries Phosphoserine. The segment covering 571–582 (QIKKKKKARRET) has biased composition (basic residues).

In terms of assembly, interacts with BCCIP, CREBBP/CBP and RELA/p65. In terms of tissue distribution, widely expressed with highest levels in muscle-dominating organs such as skeletal muscle, heart, tongue and small intestine and in endocrine glands such as thyroid and adrenal gland. Overexpressed in various cancers including breast, brain, prostate, melanoma and glioblastoma multiforme.

It localises to the endoplasmic reticulum membrane. The protein localises to the nucleus membrane. Its subcellular location is the cell junction. It is found in the tight junction. The protein resides in the nucleus. It localises to the nucleolus. The protein localises to the cytoplasm. Its subcellular location is the perinuclear region. Functionally, down-regulates SLC1A2/EAAT2 promoter activity when expressed ectopically. Activates the nuclear factor kappa-B (NF-kappa-B) transcription factor. Promotes anchorage-independent growth of immortalized melanocytes and astrocytes which is a key component in tumor cell expansion. Promotes lung metastasis and also has an effect on bone and brain metastasis, possibly by enhancing the seeding of tumor cells to the target organ endothelium. Induces chemoresistance. This chain is Protein LYRIC (MTDH), found in Homo sapiens (Human).